The chain runs to 55 residues: uncharacterized protein (55 aa).

It localises to the plastid. This is an uncharacterized protein from Cuscuta reflexa (Southern Asian dodder).